A 130-amino-acid chain; its full sequence is Small ribosomal subunit protein uS8 (130 aa).

This sequence belongs to the universal ribosomal protein uS8 family. In terms of assembly, part of the 30S ribosomal subunit. Contacts proteins S5 and S12.

In terms of biological role, one of the primary rRNA binding proteins, it binds directly to 16S rRNA central domain where it helps coordinate assembly of the platform of the 30S subunit. The sequence is that of Small ribosomal subunit protein uS8 from Acidiphilium cryptum (strain JF-5).